Here is a 347-residue protein sequence, read N- to C-terminus: Ubiquinone biosynthesis protein coq-4, mitochondrial (347 aa).

A mitochondrion-targeting transit peptide spans 1–49; it reads MEVTALRRSAALVARASSQNAIRPAVCAAISSTSPTPPTQIQTQQTRQF. Zn(2+) is bound by residues histidine 185, aspartate 186, histidine 189, and glutamate 201. A disordered region spans residues 284-310; it reads IRKREREEKRRRKEMERMLSGRGTEDV.

The protein belongs to the COQ4 family. As to quaternary structure, component of a multi-subunit COQ enzyme complex, composed of at least coq-3, coq-4, coq-5, coq-6, coq-7 and coq-9. Zn(2+) serves as cofactor.

Its subcellular location is the mitochondrion inner membrane. The catalysed reaction is a 4-hydroxy-3-methoxy-5-(all-trans-polyprenyl)benzoate + H(+) = a 2-methoxy-6-(all-trans-polyprenyl)phenol + CO2. The protein operates within cofactor biosynthesis; ubiquinone biosynthesis. In terms of biological role, lyase that catalyzes the C1-decarboxylation of 4-hydroxy-3-methoxy-5-(all-trans-polyprenyl)benzoic acid into 2-methoxy-6-(all-trans-polyprenyl)phenol during ubiquinone biosynthesis. The sequence is that of Ubiquinone biosynthesis protein coq-4, mitochondrial from Neurospora crassa (strain ATCC 24698 / 74-OR23-1A / CBS 708.71 / DSM 1257 / FGSC 987).